The primary structure comprises 266 residues: 3-methyl-2-oxobutanoate hydroxymethyltransferase (266 aa).

Positions 46 and 85 each coordinate Mg(2+). 3-methyl-2-oxobutanoate is bound by residues 46–47 (DS), aspartate 85, and lysine 115. Glutamate 117 serves as a coordination point for Mg(2+). The active-site Proton acceptor is the glutamate 183.

The protein belongs to the PanB family. As to quaternary structure, homodecamer; pentamer of dimers. Mg(2+) serves as cofactor.

Its subcellular location is the cytoplasm. It carries out the reaction 3-methyl-2-oxobutanoate + (6R)-5,10-methylene-5,6,7,8-tetrahydrofolate + H2O = 2-dehydropantoate + (6S)-5,6,7,8-tetrahydrofolate. It functions in the pathway cofactor biosynthesis; (R)-pantothenate biosynthesis; (R)-pantoate from 3-methyl-2-oxobutanoate: step 1/2. Functionally, catalyzes the reversible reaction in which hydroxymethyl group from 5,10-methylenetetrahydrofolate is transferred onto alpha-ketoisovalerate to form ketopantoate. The sequence is that of 3-methyl-2-oxobutanoate hydroxymethyltransferase from Trichlorobacter lovleyi (strain ATCC BAA-1151 / DSM 17278 / SZ) (Geobacter lovleyi).